A 389-amino-acid polypeptide reads, in one-letter code: Glutamate 5-kinase (389 aa).

Lys16 lines the ATP pocket. Ser56, Asp143, and Asn155 together coordinate substrate. 175–176 (SD) is an ATP binding site. Residues 281-358 (AGELHVDDGA…AEIETILGYP (78 aa)) form the PUA domain.

This sequence belongs to the glutamate 5-kinase family.

The protein localises to the cytoplasm. It carries out the reaction L-glutamate + ATP = L-glutamyl 5-phosphate + ADP. It participates in amino-acid biosynthesis; L-proline biosynthesis; L-glutamate 5-semialdehyde from L-glutamate: step 1/2. Catalyzes the transfer of a phosphate group to glutamate to form L-glutamate 5-phosphate. The chain is Glutamate 5-kinase from Rhizobium johnstonii (strain DSM 114642 / LMG 32736 / 3841) (Rhizobium leguminosarum bv. viciae).